The primary structure comprises 176 residues: RNA polymerase sigma factor SigO (176 aa).

The Polymerase core binding motif lies at D30 to K43. Residues M139–K158 constitute a DNA-binding region (H-T-H motif).

This sequence belongs to the sigma-70 factor family. Interacts with RNA polymerase.

Its function is as follows. Sigma factors are initiation factors that promote the attachment of RNA polymerase to specific initiation sites and are then released. Together with its coactivator RsoA, positively regulates the expression of at least three operons, including oxdC-yvrL, sigO-rsoA and yvrJ. Required for the acid stress-dependent induction of the oxalate decarboxylase oxdC. The polypeptide is RNA polymerase sigma factor SigO (sigO) (Bacillus subtilis (strain 168)).